An 815-amino-acid chain; its full sequence is Bifunctional purine biosynthetic protein purD (815 aa).

The interval 6–452 is GARS; that stretch reads NILVIGSGSR…YRKDIGQKAL (447 aa). One can recognise an ATP-grasp domain in the interval 113 to 343; that stretch reads KDFMARNNIP…LFEIVLACIE (231 aa). 139-200 provides a ligand contact to ATP; the sequence is IESLNYKIVL…EEFLDGEECS (62 aa). The Mg(2+) site is built by Glu-313 and Asn-315. The segment at 469-801 is AIRS; it reads VSYSESGVDI…KVYKIGKIIN (333 aa).

It in the N-terminal section; belongs to the GARS family. The protein in the C-terminal section; belongs to the AIR synthase family. It depends on Mg(2+) as a cofactor. Requires Mn(2+) as cofactor.

Its subcellular location is the cytoplasm. It localises to the cytosol. The catalysed reaction is 5-phospho-beta-D-ribosylamine + glycine + ATP = N(1)-(5-phospho-beta-D-ribosyl)glycinamide + ADP + phosphate + H(+). It catalyses the reaction 2-formamido-N(1)-(5-O-phospho-beta-D-ribosyl)acetamidine + ATP = 5-amino-1-(5-phospho-beta-D-ribosyl)imidazole + ADP + phosphate + H(+). Its pathway is purine metabolism; IMP biosynthesis via de novo pathway; 5-amino-1-(5-phospho-D-ribosyl)imidazole from N(2)-formyl-N(1)-(5-phospho-D-ribosyl)glycinamide: step 2/2. The protein operates within purine metabolism; IMP biosynthesis via de novo pathway; N(1)-(5-phospho-D-ribosyl)glycinamide from 5-phospho-alpha-D-ribose 1-diphosphate: step 2/2. Its function is as follows. Catalyzes the second and fifth step in the 'de novo' purine biosynthesis pathway; contains phosphoribosylamine--glycine ligase (GARS) and phosphoribosylformylglycinamidine cyclo-ligase (AIRS) activities. The protein is Bifunctional purine biosynthetic protein purD (purD) of Dictyostelium discoideum (Social amoeba).